Here is a 141-residue protein sequence, read N- to C-terminus: Large ribosomal subunit protein uL11 (141 aa).

The protein belongs to the universal ribosomal protein uL11 family. As to quaternary structure, part of the ribosomal stalk of the 50S ribosomal subunit. Interacts with L10 and the large rRNA to form the base of the stalk. L10 forms an elongated spine to which L12 dimers bind in a sequential fashion forming a multimeric L10(L12)X complex. Post-translationally, one or more lysine residues are methylated.

Its function is as follows. Forms part of the ribosomal stalk which helps the ribosome interact with GTP-bound translation factors. In Leptospira biflexa serovar Patoc (strain Patoc 1 / Ames), this protein is Large ribosomal subunit protein uL11.